The following is a 99-amino-acid chain: MRIGVVGDPDVVVGFRLAGLTDVYEVKSPEQAAKAIEELNSNSEIGLIITTERIGEEIRDTISGVKKVVVEVPDKNGPIVRENDPVKVLVRNAVGVDIK.

It belongs to the V-ATPase F subunit family. As to quaternary structure, has multiple subunits with at least A(3), B(3), C, D, E, F, H, I and proteolipid K(x).

Its subcellular location is the cell membrane. Its function is as follows. Component of the A-type ATP synthase that produces ATP from ADP in the presence of a proton gradient across the membrane. The protein is A-type ATP synthase subunit F of Methanococcus maripaludis (strain C7 / ATCC BAA-1331).